A 63-amino-acid polypeptide reads, in one-letter code: Large ribosomal subunit protein uL29 (63 aa).

Belongs to the universal ribosomal protein uL29 family.

In Yersinia enterocolitica serotype O:8 / biotype 1B (strain NCTC 13174 / 8081), this protein is Large ribosomal subunit protein uL29.